Reading from the N-terminus, the 397-residue chain is Riboflavin biosynthesis protein RibBA (397 aa).

The interval 1–199 (MFHRIEEALE…IEDLIAYRRH (199 aa)) is DHBP synthase. Residues 26–27 (RE), D31, 138–142 (RAGHT), and E162 each bind D-ribulose 5-phosphate. E27 contacts Mg(2+). H141 is a Mg(2+) binding site. Positions 200–397 (HETLVTREVE…ASKLGHLLNL (198 aa)) are GTP cyclohydrolase II. Residue 250-254 (RVHSE) coordinates GTP. Zn(2+) contacts are provided by C255, C266, and C268. GTP is bound by residues Q271, 293-295 (EGR), and T315. D327 acts as the Proton acceptor; for GTP cyclohydrolase activity in catalysis. R329 (nucleophile; for GTP cyclohydrolase activity) is an active-site residue. The GTP site is built by T350 and K355.

The protein in the N-terminal section; belongs to the DHBP synthase family. This sequence in the C-terminal section; belongs to the GTP cyclohydrolase II family. It depends on Mg(2+) as a cofactor. Mn(2+) serves as cofactor. Requires Zn(2+) as cofactor.

The catalysed reaction is D-ribulose 5-phosphate = (2S)-2-hydroxy-3-oxobutyl phosphate + formate + H(+). It catalyses the reaction GTP + 4 H2O = 2,5-diamino-6-hydroxy-4-(5-phosphoribosylamino)-pyrimidine + formate + 2 phosphate + 3 H(+). It participates in cofactor biosynthesis; riboflavin biosynthesis; 2-hydroxy-3-oxobutyl phosphate from D-ribulose 5-phosphate: step 1/1. It functions in the pathway cofactor biosynthesis; riboflavin biosynthesis; 5-amino-6-(D-ribitylamino)uracil from GTP: step 1/4. Its function is as follows. Catalyzes the conversion of D-ribulose 5-phosphate to formate and 3,4-dihydroxy-2-butanone 4-phosphate. In terms of biological role, catalyzes the conversion of GTP to 2,5-diamino-6-ribosylamino-4(3H)-pyrimidinone 5'-phosphate (DARP), formate and pyrophosphate. In Bacillus mycoides (strain KBAB4) (Bacillus weihenstephanensis), this protein is Riboflavin biosynthesis protein RibBA.